A 380-amino-acid chain; its full sequence is Transcription factor SOX-7 (380 aa).

The segment at 24–43 (SDGLSPPAVPRPSGDKSSES) is disordered. The segment at residues 45 to 113 (IRRPMNAFMV…QHMQDYPNYK (69 aa)) is a DNA-binding region (HMG box). The disordered stretch occupies residues 139 to 167 (SRDQNTLPEKNGIGRGEKEDRGEYSPGAT). A Sox C-terminal domain is found at 260-380 (VSMMSSVSGC…ATYYNSYSVS (121 aa)). Residues 323–328 (EFDQYL) form a required for beta-catenin-binding region.

Interacts with CTNNB1/beta-catenin; this interaction may lead to the proteasomal degradation of active CTNNB1 and thus inhibition of Wnt/beta-catenin-stimulated transcription. In terms of tissue distribution, predominantly expressed in ovary, lung and heart. In the ovary, restricted to oocytes (at protein level). Present both in mesenchymal and epithelial cells in some adult tissues, including ear.

The protein resides in the nucleus. It localises to the cytoplasm. Binds to and activates the CDH5 promoter, hence plays a role in the transcriptional regulation of genes expressed in the hemogenic endothelium and blocks further differentiation into blood precursors. May be required for the survival of both hematopoietic and endothelial precursors during specification. May play a role in skeletal myogenesis and up-regulate the expression of muscle markers, such as PAX3/PAX7 and Meox1. Competes with GATA4 for binding and activation of the FGF3 promoter. Represses Wnt/beta-catenin-stimulated transcription. Probably acts by targeting CTNNB1 to proteasomal degradation. Binds the DNA sequence 5'-AACAAT-3'. In Mus musculus (Mouse), this protein is Transcription factor SOX-7 (Sox7).